A 141-amino-acid chain; its full sequence is MDPLSVFFLVVAAAAVCTLLLQAYAVYENFDSILEFNDAHASLEYSKSLGGSYIDKHVFDPNDGVADVTQKWRCALYGKVYVSASAFGFYAQPDGSKRTFSTRDDCVDFTFGTADTSRVVNPCTDPNGAQAEDCAFLKSVL.

A helical; Signal-anchor for type II membrane protein membrane pass occupies residues 1 to 21; it reads MDPLSVFFLVVAAAAVCTLLL. Residues 22–140 lie on the Virion surface side of the membrane; that stretch reads QAYAVYENFD…AEDCAFLKSV (119 aa).

The protein belongs to the poxviridae A28 protein family. In terms of processing, contains two intramolecular disulfide bonds. They are created by the viral disulfide bond formation pathway, a poxvirus-specific pathway that operates on the cytoplasmic side of the MV membranes.

It is found in the virion membrane. Envelope protein required for virus entry into host cell and for cell-cell fusion (syncytium formation). The sequence is that of Envelope protein A28 homolog from Molluscum contagiosum virus subtype 1 (MOCV).